Here is a 1396-residue protein sequence, read N- to C-terminus: Sterol 3-beta-glucosyltransferase (1396 aa).

Over residues 1-16 the composition is skewed to basic and acidic residues; that stretch reads MRPFIDDAKRRAERRL. 4 disordered regions span residues 1–21, 40–64, 83–196, and 209–232; these read MRPFIDDAKRRAERRLSASRQ, DADDAQMDYTAPPSSNDSRDGMQYM, ARFD…RAAP, and ETENPEENPQTLEEKEQGVSKKSQ. The segment covering 94-107 has biased composition (basic and acidic residues); the sequence is ETRTRPRFLSEKPF. Residues 186-196 show a composition bias toward low complexity; the sequence is RPRSATPRAAP. The 36-residue stretch at 238-273 folds into the GRAM 1 domain; it reads RQLMEMFRFPTPEKVVVEYACSLLQSMLLQGYMYVT. The PH domain maps to 289 to 388; sequence RVIKSGYIYK…WVRALQKVIF (100 aa). Disordered regions lie at residues 460–532 and 571–627; these read GTPT…SSSS and TIHT…ESKD. Polar residues-rich tracts occupy residues 484–532 and 571–584; these read GSQN…SSSS and TIHTWQQRTSGTAR. A compositionally biased stretch (basic and acidic residues) spans 588–602; the sequence is RHSDEITRSTTEHGL. Residues 717–783 enclose the GRAM 2 domain; it reads ERFRAHFALP…HDIENVEKEK (67 aa). The UDP-alpha-D-glucose site is built by serine 905, arginine 906, aspartate 908, alanine 1208, histidine 1210, histidine 1223, glycine 1227, threonine 1228, aspartate 1247, and glutamine 1248. The segment covering 1324 to 1343 has biased composition (low complexity); that stretch reads SSISSTPFSPTPSTKTSDDQ. A disordered region spans residues 1324 to 1346; that stretch reads SSISSTPFSPTPSTKTSDDQNAN.

This sequence belongs to the glycosyltransferase 28 family.

It localises to the cytoplasm. The protein resides in the preautophagosomal structure membrane. It catalyses the reaction a sterol + UDP-alpha-D-glucose = a sterol 3-beta-D-glucoside + UDP + H(+). The catalysed reaction is ergosterol + UDP-alpha-D-glucose = ergosteryl 3-beta-D-glucoside + UDP + H(+). Functionally, sterol glycosyltransferase responsible for the glycosylation of ergosterol to form ergosterol-glucoside. The chain is Sterol 3-beta-glucosyltransferase from Emericella nidulans (strain FGSC A4 / ATCC 38163 / CBS 112.46 / NRRL 194 / M139) (Aspergillus nidulans).